The chain runs to 205 residues: Probable DNA-binding protein (205 aa).

Positions 140-168 (GEGDGAPRPACPDFSTRGAETGNQGVQPG) are disordered.

The protein is Probable DNA-binding protein of Homo sapiens (Human).